A 1068-amino-acid polypeptide reads, in one-letter code: Cytospin-B (1068 aa).

Residues 1-221 (MRSAAKPWNP…VDGTSVSPGD (221 aa)) are disordered. A lipid anchor (N-myristoyl glycine) is attached at Arg-2. The span at 29–40 (SSGMKSSKSSTS) shows a compositional bias: low complexity. Residues Ser-38 and Ser-55 each carry the phosphoserine modification. Phosphothreonine is present on Thr-78. Phosphoserine occurs at positions 112, 131, 134, 137, and 138. Over residues 126 to 144 (SNPRKSVSSPTSSNTPTPT) the composition is skewed to low complexity. At Thr-142 the chain carries Phosphothreonine. Over residues 154 to 200 (PKQENEGGEKAALESQVRELLAEAKAKDSEINRLRSELKKYKEKRTL) the composition is skewed to basic and acidic residues. Phosphoserine is present on residues Ser-218 and Ser-241. 3 stretches are compositionally biased toward polar residues: residues 261–295 (PNSEGAASHTGDSSCPTSITQESSFGSPTGNQMSS), 309–323 (LRTSGSSSSDVTKAS), and 337–367 (ETPSRPLSSTSNPFKSSKCSTAGSSPNSVSE). The tract at residues 261–367 (PNSEGAASHT…AGSSPNSVSE (107 aa)) is disordered. Phosphoserine occurs at positions 361, 366, 369, and 425. A coiled-coil region spans residues 579–773 (EVQEMLKVAR…QKELGDVQGH (195 aa)). A disordered region spans residues 777–796 (VTSRAAPPPVDEEPESSEVD). Phosphoserine occurs at positions 847 and 863. Disordered stretches follow at residues 859–885 (AAAVSPMQRHSTYSSVRPASRGVTQRL) and 898–922 (GRTETLKPDPHLRKSPSLESLSRPP). Residues 866 to 875 (QRHSTYSSVR) show a composition bias toward polar residues. The segment covering 898–909 (GRTETLKPDPHL) has biased composition (basic and acidic residues). 2 positions are modified to phosphoserine: Ser-912 and Ser-914. A compositionally biased stretch (low complexity) spans 912 to 922 (SPSLESLSRPP). In terms of domain architecture, Calponin-homology (CH) spans 962–1067 (GSKRNALLKW…YVAQIYKYFE (106 aa)).

This sequence belongs to the cytospin-A family. Highly expressed in testis. Barely detectable in other tissues. Also highly expressed in some cancer cell lines.

It localises to the nucleus. Its subcellular location is the membrane. The sequence is that of Cytospin-B (SPECC1) from Homo sapiens (Human).